Here is a 154-residue protein sequence, read N- to C-terminus: Decarboxylase claH (154 aa).

Belongs to the tpcK family.

The catalysed reaction is atrochrysone carboxylate + H(+) = atrochrysone + CO2. It functions in the pathway pigment biosynthesis. Functionally, decarboxylase involved in the biosynthesis of the bianthraquinone cladofulvin, a conidial pigment not required for virulence but that plays a role in fitness and resistance to environmental stresses including UV light and low-temperature stress. The pathway begins with the synthesis of atrochrysone thioester by the polyketide synthase (PKS) claG. The atrochrysone carboxyl ACP thioesterase claF then breaks the thioester bond and releases the atrochrysone carboxylic acid from claG. This compound is decarboxylated by claH to yield emodin, which is further converted to chrysophanol hydroquinone by the reductase claC and the dehydratase claB. The cytochrome monooxygenase P450 claM then catalyzes the dimerization of nataloe-emodin to cladofulvin. The chain is Decarboxylase claH from Passalora fulva (Tomato leaf mold).